Here is a 241-residue protein sequence, read N- to C-terminus: 1-(5-phosphoribosyl)-5-[(5-phosphoribosylamino)methylideneamino] imidazole-4-carboxamide isomerase (241 aa).

Catalysis depends on Asp-8, which acts as the Proton acceptor. The active-site Proton donor is Asp-129.

It belongs to the HisA/HisF family.

It localises to the cytoplasm. The enzyme catalyses 1-(5-phospho-beta-D-ribosyl)-5-[(5-phospho-beta-D-ribosylamino)methylideneamino]imidazole-4-carboxamide = 5-[(5-phospho-1-deoxy-D-ribulos-1-ylimino)methylamino]-1-(5-phospho-beta-D-ribosyl)imidazole-4-carboxamide. It functions in the pathway amino-acid biosynthesis; L-histidine biosynthesis; L-histidine from 5-phospho-alpha-D-ribose 1-diphosphate: step 4/9. This chain is 1-(5-phosphoribosyl)-5-[(5-phosphoribosylamino)methylideneamino] imidazole-4-carboxamide isomerase, found in Chloroflexus aggregans (strain MD-66 / DSM 9485).